A 107-amino-acid chain; its full sequence is Ferredoxin 1 (107 aa).

4Fe-4S ferredoxin-type domains follow at residues 2 to 30 and 31 to 60; these read TFVV…YEGP and NFLV…SEDE. Cys-9 and Cys-17 together coordinate [3Fe-4S] cluster. Residues Cys-21, Cys-40, Cys-43, and Cys-46 each contribute to the [4Fe-4S] cluster site. Cys-50 serves as a coordination point for [3Fe-4S] cluster.

Requires [4Fe-4S] cluster as cofactor. [3Fe-4S] cluster is required as a cofactor.

Its function is as follows. Ferredoxins are iron-sulfur proteins that transfer electrons in a wide variety of metabolic reactions. The chain is Ferredoxin 1 (fdxA) from Pseudomonas putida (strain ATCC 47054 / DSM 6125 / CFBP 8728 / NCIMB 11950 / KT2440).